Here is a 73-residue protein sequence, read N- to C-terminus: Protein SlyX homolog (73 aa).

This sequence belongs to the SlyX family.

This Haemophilus influenzae (strain PittEE) protein is Protein SlyX homolog.